The following is a 314-amino-acid chain: Taste receptor type 2 member 42 (314 aa).

At 1–7 (MATELDK) the chain is on the extracellular side. A helical transmembrane segment spans residues 8-28 (IFLTLAIVEFIIGMLGNVFIG). The Cytoplasmic segment spans residues 29–50 (LANCSEGIKNQKVFSVDFILTC). The chain crosses the membrane as a helical span at residues 51-71 (LAISTIGHLLVILFDSHVAGL). The Extracellular segment spans residues 72–101 (APHLYATDRVVRPVTVLWHMTNHLTTWLAT). Residues 102-122 (CLSIFYFFKIAHFPHSLFLWL) form a helical membrane-spanning segment. Residues 123–127 (RWRMN) lie on the Cytoplasmic side of the membrane. A helical membrane pass occupies residues 128 to 148 (RVIAILLTLSLFLLIFDCLVL). Topologically, residues 149-187 (EMFIDISLNIIDKSNLTLYLDESKTPYDKLFLLKTLLSL) are extracellular. Residue N163 is glycosylated (N-linked (GlcNAc...) asparagine). Residues 188–208 (NSFIPFSLCLTSLLFLFLSLV) form a helical membrane-spanning segment. The Cytoplasmic segment spans residues 209-238 (RHTRNLKLSSLGSRDSSTEAHRRAMKMVMS). A helical transmembrane segment spans residues 239 to 259 (FLFLFIVHFFSLQVANWTFCI). The Extracellular segment spans residues 260 to 265 (LGNNKY). The chain crosses the membrane as a helical span at residues 266–286 (TQFVMLALHAFPSCHSFILIL). At 287 to 314 (GNSKLRQTAVRLLWHLRNYTKRPNPLPL) the chain is on the cytoplasmic side.

The protein belongs to the G-protein coupled receptor T2R family.

Its subcellular location is the membrane. Functionally, receptor that may play a role in the perception of bitterness and is gustducin-linked. May play a role in sensing the chemical composition of the gastrointestinal content. The activity of this receptor may stimulate alpha gustducin, mediate PLC-beta-2 activation and lead to the gating of TRPM5. The sequence is that of Taste receptor type 2 member 42 (TAS2R42) from Papio hamadryas (Hamadryas baboon).